Here is a 356-residue protein sequence, read N- to C-terminus: Magnesium-protoporphyrin IX monomethyl ester [oxidative] cyclase (356 aa).

This sequence belongs to the AcsF family. Requires Fe cation as cofactor.

It carries out the reaction Mg-protoporphyrin IX 13-monomethyl ester + 3 NADPH + 3 O2 + 2 H(+) = 3,8-divinyl protochlorophyllide a + 3 NADP(+) + 5 H2O. It participates in porphyrin-containing compound metabolism; chlorophyll biosynthesis (light-independent). Its function is as follows. Catalyzes the formation of the isocyclic ring in chlorophyll biosynthesis. Mediates the cyclase reaction, which results in the formation of divinylprotochlorophyllide (Pchlide) characteristic of all chlorophylls from magnesium-protoporphyrin IX 13-monomethyl ester (MgPMME). This chain is Magnesium-protoporphyrin IX monomethyl ester [oxidative] cyclase, found in Synechococcus sp. (strain CC9605).